Reading from the N-terminus, the 180-residue chain is MPQRLKQVYQDTIVPKLTEQFSYKNPHEVPKVVKITVNRGLGEASQNAKALESSINELSTITGQKPVVTRAKKAIAGFKIRQGMPVGVMVTLRSDRMYAFLDRLINLALPRIRDFRGISAKSFDGRGNYSLGIREQLIFPEIDYDTIDQIRGMDVSIITTAQTDEEGRALLKELGMPFRT.

It belongs to the universal ribosomal protein uL5 family. As to quaternary structure, part of the 50S ribosomal subunit; part of the 5S rRNA/L5/L18/L25 subcomplex. Contacts the 5S rRNA and the P site tRNA. Forms a bridge to the 30S subunit in the 70S ribosome.

In terms of biological role, this is one of the proteins that bind and probably mediate the attachment of the 5S RNA into the large ribosomal subunit, where it forms part of the central protuberance. In the 70S ribosome it contacts protein S13 of the 30S subunit (bridge B1b), connecting the 2 subunits; this bridge is implicated in subunit movement. Contacts the P site tRNA; the 5S rRNA and some of its associated proteins might help stabilize positioning of ribosome-bound tRNAs. This Rippkaea orientalis (strain PCC 8801 / RF-1) (Cyanothece sp. (strain PCC 8801)) protein is Large ribosomal subunit protein uL5.